Here is a 202-residue protein sequence, read N- to C-terminus: Small ribosomal subunit protein uS4 (202 aa).

The tract at residues threonine 22–glycine 48 is disordered. The region spanning arginine 93–glycine 154 is the S4 RNA-binding domain.

Belongs to the universal ribosomal protein uS4 family. As to quaternary structure, part of the 30S ribosomal subunit. Contacts protein S5. The interaction surface between S4 and S5 is involved in control of translational fidelity.

Functionally, one of the primary rRNA binding proteins, it binds directly to 16S rRNA where it nucleates assembly of the body of the 30S subunit. With S5 and S12 plays an important role in translational accuracy. In Lactiplantibacillus plantarum (strain ATCC BAA-793 / NCIMB 8826 / WCFS1) (Lactobacillus plantarum), this protein is Small ribosomal subunit protein uS4.